A 260-amino-acid polypeptide reads, in one-letter code: 3'-5' ssDNA/RNA exonuclease TatD (260 aa).

A divalent metal cation-binding residues include Glu-92, His-128, and His-153.

This sequence belongs to the metallo-dependent hydrolases superfamily. TatD-type hydrolase family. TatD subfamily. As to quaternary structure, monomer. Mg(2+) is required as a cofactor.

It localises to the cytoplasm. Its function is as follows. 3'-5' exonuclease that prefers single-stranded DNA and RNA. May play a role in the H(2)O(2)-induced DNA damage repair. This Pectobacterium carotovorum subsp. carotovorum (strain PC1) protein is 3'-5' ssDNA/RNA exonuclease TatD.